The following is a 360-amino-acid chain: tRNA N6-adenosine threonylcarbamoyltransferase (360 aa).

2 residues coordinate Fe cation: H115 and H119. Substrate contacts are provided by residues 137–141 (LVSGG), D170, G183, and N283. Fe cation is bound at residue D311.

The protein belongs to the KAE1 / TsaD family. The cofactor is Fe(2+).

It is found in the cytoplasm. It catalyses the reaction L-threonylcarbamoyladenylate + adenosine(37) in tRNA = N(6)-L-threonylcarbamoyladenosine(37) in tRNA + AMP + H(+). In terms of biological role, required for the formation of a threonylcarbamoyl group on adenosine at position 37 (t(6)A37) in tRNAs that read codons beginning with adenine. Is involved in the transfer of the threonylcarbamoyl moiety of threonylcarbamoyl-AMP (TC-AMP) to the N6 group of A37, together with TsaE and TsaB. TsaD likely plays a direct catalytic role in this reaction. This Rhizobium meliloti (strain 1021) (Ensifer meliloti) protein is tRNA N6-adenosine threonylcarbamoyltransferase.